The following is a 447-amino-acid chain: N-succinylarginine dihydrolase (447 aa).

Residues 19–28 (AGLSFGNEAS), Asn110, and 137–138 (HR) each bind substrate. Glu174 is an active-site residue. Residue Arg212 participates in substrate binding. His248 is an active-site residue. Substrate-binding residues include Asp250 and Asn359. Cys365 acts as the Nucleophile in catalysis.

The protein belongs to the succinylarginine dihydrolase family. Homodimer.

It carries out the reaction N(2)-succinyl-L-arginine + 2 H2O + 2 H(+) = N(2)-succinyl-L-ornithine + 2 NH4(+) + CO2. It participates in amino-acid degradation; L-arginine degradation via AST pathway; L-glutamate and succinate from L-arginine: step 2/5. Functionally, catalyzes the hydrolysis of N(2)-succinylarginine into N(2)-succinylornithine, ammonia and CO(2). The chain is N-succinylarginine dihydrolase from Escherichia coli O81 (strain ED1a).